The primary structure comprises 323 residues: Oligodendrocyte transcription factor 2 (323 aa).

A compositionally biased stretch (polar residues) spans 1 to 13 (MDSDASLVSSRPS). Residues 1–107 (MDSDASLVSS…KKQMTEPELQ (107 aa)) are disordered. Low complexity predominate over residues 77 to 93 (SSSSSTSSSTSSAATSS). The region spanning 108-162 (QLRLKINSRERKRMHDLNIAMDGLREVMPYAHGPSVRKLSKIATLLLARNYILML) is the bHLH domain.

As to quaternary structure, interacts with NKX2-2. Interacts with ZNF488. As to expression, expressed specifically in the brain.

It is found in the nucleus. The protein localises to the cytoplasm. Required for oligodendrocyte and motor neuron specification in the spinal cord, as well as for the development of somatic motor neurons in the hindbrain. Functions together with ZNF488 to promote oligodendrocyte differentiation. Cooperates with OLIG1 to establish the pMN domain of the embryonic neural tube. Antagonist of V2 interneuron and of NKX2-2-induced V3 interneuron development. This is Oligodendrocyte transcription factor 2 (Olig2) from Mus musculus (Mouse).